Here is a 534-residue protein sequence, read N- to C-terminus: Serine/threonine-protein phosphatase 2B catalytic subunit (534 aa).

Residues Asp-88, His-90, and Asp-116 each coordinate Fe cation. 2 residues coordinate Zn(2+): Asp-116 and Asn-148. His-149 functions as the Proton donor in the catalytic mechanism. The Zn(2+) site is built by His-197 and His-279. Disordered stretches follow at residues 375 to 398 (LEDETPTSVSPSAPSPPLPMDVES) and 475 to 534 (PSHE…TREA). Basic and acidic residues-rich tracts occupy residues 475-497 (PSHEEVIKRSEEERRAALERAQQ) and 524-534 (QRDAARETREA).

The protein belongs to the PPP phosphatase family. PP-2B subfamily. Composed of two components (A and B), the A component is the catalytic subunit and the B component confers calcium sensitivity. Requires Fe(3+) as cofactor. It depends on Zn(2+) as a cofactor.

The catalysed reaction is O-phospho-L-seryl-[protein] + H2O = L-seryl-[protein] + phosphate. It catalyses the reaction O-phospho-L-threonyl-[protein] + H2O = L-threonyl-[protein] + phosphate. Functionally, calcium-dependent, calmodulin-stimulated protein phosphatase. This subunit may have a role in the calmodulin activation of calcineurin. The protein is Serine/threonine-protein phosphatase 2B catalytic subunit (cnaA) of Aspergillus fumigatus (strain ATCC MYA-4609 / CBS 101355 / FGSC A1100 / Af293) (Neosartorya fumigata).